Reading from the N-terminus, the 712-residue chain is Polyribonucleotide nucleotidyltransferase (712 aa).

Positions 487 and 493 each coordinate Mg(2+). Residues 554-613 (PKIITMTINPDKIRDVIGPSGKQINKIIEETGVKIDIEQDGTVFISSINQEMNDKAKKII) form the KH domain. The S1 motif domain occupies 623 to 691 (GEIYEGKVKR…KQGRVNLSRK (69 aa)).

Belongs to the polyribonucleotide nucleotidyltransferase family. It depends on Mg(2+) as a cofactor.

The protein resides in the cytoplasm. It carries out the reaction RNA(n+1) + phosphate = RNA(n) + a ribonucleoside 5'-diphosphate. Its function is as follows. Involved in mRNA degradation. Catalyzes the phosphorolysis of single-stranded polyribonucleotides processively in the 3'- to 5'-direction. This is Polyribonucleotide nucleotidyltransferase from Bacillus anthracis.